The sequence spans 348 residues: Nicotinate-nucleotide--dimethylbenzimidazole phosphoribosyltransferase (348 aa).

E316 (proton acceptor) is an active-site residue.

It belongs to the CobT family.

The catalysed reaction is 5,6-dimethylbenzimidazole + nicotinate beta-D-ribonucleotide = alpha-ribazole 5'-phosphate + nicotinate + H(+). Its pathway is nucleoside biosynthesis; alpha-ribazole biosynthesis; alpha-ribazole from 5,6-dimethylbenzimidazole: step 1/2. Catalyzes the synthesis of alpha-ribazole-5'-phosphate from nicotinate mononucleotide (NAMN) and 5,6-dimethylbenzimidazole (DMB). The polypeptide is Nicotinate-nucleotide--dimethylbenzimidazole phosphoribosyltransferase (Xanthomonas campestris pv. campestris (strain B100)).